The sequence spans 292 residues: Protease HtpX (292 aa).

Transmembrane regions (helical) follow at residues 5 to 25 (VVLF…VMSV) and 35 to 55 (GLLV…LLLS). Histidine 140 contributes to the Zn(2+) binding site. Glutamate 141 is an active-site residue. Residue histidine 144 coordinates Zn(2+). A run of 2 helical transmembrane segments spans residues 155 to 175 (LLQG…GGII) and 193 to 213 (IIVF…AMWF). A Zn(2+)-binding site is contributed by glutamate 218.

It belongs to the peptidase M48B family. Requires Zn(2+) as cofactor.

Its subcellular location is the cell inner membrane. The sequence is that of Protease HtpX from Xanthomonas campestris pv. campestris (strain 8004).